The sequence spans 463 residues: ATP synthase subunit beta (463 aa).

151–158 (GGAGVGKT) lines the ATP pocket.

This sequence belongs to the ATPase alpha/beta chains family. F-type ATPases have 2 components, CF(1) - the catalytic core - and CF(0) - the membrane proton channel. CF(1) has five subunits: alpha(3), beta(3), gamma(1), delta(1), epsilon(1). CF(0) has three main subunits: a(1), b(2) and c(9-12). The alpha and beta chains form an alternating ring which encloses part of the gamma chain. CF(1) is attached to CF(0) by a central stalk formed by the gamma and epsilon chains, while a peripheral stalk is formed by the delta and b chains.

It localises to the cell membrane. It catalyses the reaction ATP + H2O + 4 H(+)(in) = ADP + phosphate + 5 H(+)(out). In terms of biological role, produces ATP from ADP in the presence of a proton gradient across the membrane. The catalytic sites are hosted primarily by the beta subunits. This chain is ATP synthase subunit beta, found in Clostridium botulinum (strain Okra / Type B1).